The primary structure comprises 426 residues: 3-phosphoshikimate 1-carboxyvinyltransferase (426 aa).

3-phosphoshikimate-binding residues include K23, S24, and R28. K23 is a phosphoenolpyruvate binding site. Residues G96 and R124 each coordinate phosphoenolpyruvate. T170, S171, Q172, S198, D314, and K341 together coordinate 3-phosphoshikimate. Position 172 (Q172) interacts with phosphoenolpyruvate. The active-site Proton acceptor is the D314. 3 residues coordinate phosphoenolpyruvate: R345, R386, and K411.

It belongs to the EPSP synthase family. As to quaternary structure, monomer.

It localises to the cytoplasm. It carries out the reaction 3-phosphoshikimate + phosphoenolpyruvate = 5-O-(1-carboxyvinyl)-3-phosphoshikimate + phosphate. It participates in metabolic intermediate biosynthesis; chorismate biosynthesis; chorismate from D-erythrose 4-phosphate and phosphoenolpyruvate: step 6/7. Functionally, catalyzes the transfer of the enolpyruvyl moiety of phosphoenolpyruvate (PEP) to the 5-hydroxyl of shikimate-3-phosphate (S3P) to produce enolpyruvyl shikimate-3-phosphate and inorganic phosphate. In Trichormus variabilis (strain ATCC 29413 / PCC 7937) (Anabaena variabilis), this protein is 3-phosphoshikimate 1-carboxyvinyltransferase.